A 287-amino-acid polypeptide reads, in one-letter code: Elongation factor Ts (287 aa).

The interval 77-80 is involved in Mg(2+) ion dislocation from EF-Tu; the sequence is TDFV.

Belongs to the EF-Ts family.

It localises to the cytoplasm. Its function is as follows. Associates with the EF-Tu.GDP complex and induces the exchange of GDP to GTP. It remains bound to the aminoacyl-tRNA.EF-Tu.GTP complex up to the GTP hydrolysis stage on the ribosome. In Wolbachia sp. subsp. Brugia malayi (strain TRS), this protein is Elongation factor Ts.